Reading from the N-terminus, the 1228-residue chain is ABC transporter B family member 16 (1228 aa).

Transmembrane regions (helical) follow at residues 22 to 42 (MGLG…LFFI), 69 to 89 (LAML…GYCW), 145 to 167 (LPNI…MLLW), 171 to 193 (IVGF…ALIG), 251 to 271 (GIAI…TWYG), and 283 to 303 (GTVS…GQAL). The 290-residue stretch at 22–311 (MGLGLIGAVG…ALSNLKYFSE (290 aa)) folds into the ABC transmembrane type-1 1 domain. In terms of domain architecture, ABC transporter 1 spans 346-582 (VEFNNVKCKY…DGKYTSLVRL (237 aa)). An ATP-binding site is contributed by 381–388 (GGSGSGKS). Asn529, Asn593, and Asn628 each carry an N-linked (GlcNAc...) asparagine glycan. Residues 658–946 (ALCGCLSASL…AGTMTTDLAK (289 aa)) enclose the ABC transmembrane type-1 2 domain. 2 helical membrane passes run 667–687 (LGGA…SVFF) and 700–720 (IYVL…ISQQ). An N-linked (GlcNAc...) asparagine glycan is attached at Asn755. 2 consecutive transmembrane segments (helical) span residues 781–801 (LLVQ…VIAW) and 805–825 (IVMI…RVLL). Asn827 is a glycosylation site (N-linked (GlcNAc...) asparagine). 2 consecutive transmembrane segments (helical) span residues 881–901 (SWLA…TSAL) and 920–940 (FFEL…AGTM). The ABC transporter 2 domain maps to 981–1219 (ITFLNVDFAY…GPTGSYFSLV (239 aa)). Asn1001 carries an N-linked (GlcNAc...) asparagine glycan. 1016 to 1023 (GPSRSGKS) provides a ligand contact to ATP.

It belongs to the ABC transporter superfamily. ABCB family. Multidrug resistance exporter (TC 3.A.1.201) subfamily.

The protein localises to the membrane. In Arabidopsis thaliana (Mouse-ear cress), this protein is ABC transporter B family member 16 (ABCB16).